The primary structure comprises 353 residues: Photosystem II D2 protein (353 aa).

Thr2 carries the post-translational modification N-acetylthreonine. Residue Thr2 is modified to Phosphothreonine. Residues Cys41–Thr61 form a helical membrane-spanning segment. Residue His118 coordinates chlorophyll a. A helical membrane pass occupies residues Gly125–Pro141. Residues Gln130 and Asn143 each coordinate pheophytin a. Residues Val153–Ser166 form a helical membrane-spanning segment. His198 lines the chlorophyll a pocket. Residues Ala208–Asp228 form a helical membrane-spanning segment. His215 and Phe262 together coordinate a plastoquinone. His215 contributes to the Fe cation binding site. His269 lines the Fe cation pocket. Residues Gly279–Arg295 form a helical membrane-spanning segment.

The protein belongs to the reaction center PufL/M/PsbA/D family. In terms of assembly, PSII is composed of 1 copy each of membrane proteins PsbA, PsbB, PsbC, PsbD, PsbE, PsbF, PsbH, PsbI, PsbJ, PsbK, PsbL, PsbM, PsbT, PsbX, PsbY, PsbZ, Psb30/Ycf12, at least 3 peripheral proteins of the oxygen-evolving complex and a large number of cofactors. It forms dimeric complexes. The cofactor is The D1/D2 heterodimer binds P680, chlorophylls that are the primary electron donor of PSII, and subsequent electron acceptors. It shares a non-heme iron and each subunit binds pheophytin, quinone, additional chlorophylls, carotenoids and lipids. There is also a Cl(-1) ion associated with D1 and D2, which is required for oxygen evolution. The PSII complex binds additional chlorophylls, carotenoids and specific lipids..

It is found in the plastid. Its subcellular location is the chloroplast thylakoid membrane. The catalysed reaction is 2 a plastoquinone + 4 hnu + 2 H2O = 2 a plastoquinol + O2. In terms of biological role, photosystem II (PSII) is a light-driven water:plastoquinone oxidoreductase that uses light energy to abstract electrons from H(2)O, generating O(2) and a proton gradient subsequently used for ATP formation. It consists of a core antenna complex that captures photons, and an electron transfer chain that converts photonic excitation into a charge separation. The D1/D2 (PsbA/PsbD) reaction center heterodimer binds P680, the primary electron donor of PSII as well as several subsequent electron acceptors. D2 is needed for assembly of a stable PSII complex. This is Photosystem II D2 protein from Atropa belladonna (Belladonna).